A 179-amino-acid chain; its full sequence is Large ribosomal subunit protein uL5 (179 aa).

This sequence belongs to the universal ribosomal protein uL5 family. As to quaternary structure, part of the 50S ribosomal subunit; part of the 5S rRNA/L5/L18/L25 subcomplex. Contacts the 5S rRNA and the P site tRNA. Forms a bridge to the 30S subunit in the 70S ribosome.

Its function is as follows. This is one of the proteins that bind and probably mediate the attachment of the 5S RNA into the large ribosomal subunit, where it forms part of the central protuberance. In the 70S ribosome it contacts protein S13 of the 30S subunit (bridge B1b), connecting the 2 subunits; this bridge is implicated in subunit movement. Contacts the P site tRNA; the 5S rRNA and some of its associated proteins might help stabilize positioning of ribosome-bound tRNAs. This is Large ribosomal subunit protein uL5 from Clostridium botulinum (strain Alaska E43 / Type E3).